Reading from the N-terminus, the 592-residue chain is UPF0329 protein ECU01_0110/ECU01_1500/ECU08_0040 (592 aa).

Composition is skewed to basic and acidic residues over residues 306 to 339 (RQRR…SKEK) and 353 to 362 (EAKEEEKKES). The interval 306–404 (RQRRREREIE…RKRYKIHRRV (99 aa)) is disordered.

The protein belongs to the UPF0329 family.

The chain is UPF0329 protein ECU01_0110/ECU01_1500/ECU08_0040 from Encephalitozoon cuniculi (strain GB-M1) (Microsporidian parasite).